The chain runs to 492 residues: Glutamyl-tRNA(Gln) amidotransferase subunit A (492 aa).

Active-site charge relay system residues include Lys79 and Ser154. Ser178 serves as the catalytic Acyl-ester intermediate.

Belongs to the amidase family. GatA subfamily. In terms of assembly, heterotrimer of A, B and C subunits.

It carries out the reaction L-glutamyl-tRNA(Gln) + L-glutamine + ATP + H2O = L-glutaminyl-tRNA(Gln) + L-glutamate + ADP + phosphate + H(+). In terms of biological role, allows the formation of correctly charged Gln-tRNA(Gln) through the transamidation of misacylated Glu-tRNA(Gln) in organisms which lack glutaminyl-tRNA synthetase. The reaction takes place in the presence of glutamine and ATP through an activated gamma-phospho-Glu-tRNA(Gln). This Desulforudis audaxviator (strain MP104C) protein is Glutamyl-tRNA(Gln) amidotransferase subunit A.